Reading from the N-terminus, the 445-residue chain is 3-phosphoshikimate 1-carboxyvinyltransferase (445 aa).

3-phosphoshikimate contacts are provided by lysine 34, serine 35, and arginine 39. Lysine 34 lines the phosphoenolpyruvate pocket. Residues glycine 112 and arginine 140 each coordinate phosphoenolpyruvate. Residues serine 186, serine 187, glutamine 188, serine 216, glutamate 331, and histidine 358 each contribute to the 3-phosphoshikimate site. A phosphoenolpyruvate-binding site is contributed by glutamine 188. Glutamate 331 acts as the Proton acceptor in catalysis. Residues arginine 362, arginine 403, and lysine 428 each coordinate phosphoenolpyruvate.

This sequence belongs to the EPSP synthase family. As to quaternary structure, monomer.

The protein localises to the cytoplasm. It catalyses the reaction 3-phosphoshikimate + phosphoenolpyruvate = 5-O-(1-carboxyvinyl)-3-phosphoshikimate + phosphate. The protein operates within metabolic intermediate biosynthesis; chorismate biosynthesis; chorismate from D-erythrose 4-phosphate and phosphoenolpyruvate: step 6/7. Catalyzes the transfer of the enolpyruvyl moiety of phosphoenolpyruvate (PEP) to the 5-hydroxyl of shikimate-3-phosphate (S3P) to produce enolpyruvyl shikimate-3-phosphate and inorganic phosphate. The chain is 3-phosphoshikimate 1-carboxyvinyltransferase from Kocuria rhizophila (strain ATCC 9341 / DSM 348 / NBRC 103217 / DC2201).